Reading from the N-terminus, the 316-residue chain is MSNKLEQLRKLTTVVADTGEIDAIKKYQPEDATTNPSLILKAAQIAEYAPLIDASIEYAKAQSNDKAQQVQDTCDMLAVNIGKEILKTIPGRISTEVDARLSYDMEGSVAKARQLVKMYNDAGITNDRILIKLASTWEGIRAAEILEKEGINCNLTLLFSFAQARACAEAGVFLISPFVGRIMDWYKAKEGRDFEASEDPGVLSVTKIYNYYKEYGYKTVVMGASFRNIGEILELAGCDRLTIAPALLAELEAAEGEVVEKLVDSKGAAERPAPMTHAEFLWEHNQDPMAVEKLAEGIRNFAVDQGKLEAMIEAKL.

Residue lysine 132 is the Schiff-base intermediate with substrate of the active site.

Belongs to the transaldolase family. Type 1 subfamily. As to quaternary structure, homodimer.

It localises to the cytoplasm. It catalyses the reaction D-sedoheptulose 7-phosphate + D-glyceraldehyde 3-phosphate = D-erythrose 4-phosphate + beta-D-fructose 6-phosphate. It functions in the pathway carbohydrate degradation; pentose phosphate pathway; D-glyceraldehyde 3-phosphate and beta-D-fructose 6-phosphate from D-ribose 5-phosphate and D-xylulose 5-phosphate (non-oxidative stage): step 2/3. Transaldolase is important for the balance of metabolites in the pentose-phosphate pathway. This is Transaldolase from Vibrio parahaemolyticus serotype O3:K6 (strain RIMD 2210633).